A 146-amino-acid chain; its full sequence is MDNEMTLTFLALSENEALARVAVTGFIAQLDPTIDELSEFKTVVSEAVSNAIIHGYEEDGKGVVTVHAKREDDVVTVSVMHKGIGIEDVSQAMEPLFTTKSVMERSGMGFTIMDSFSDQLTVMSKWREGTTVTFTKKFYTVRTAVM.

The protein belongs to the anti-sigma-factor family.

The catalysed reaction is L-seryl-[protein] + ATP = O-phospho-L-seryl-[protein] + ADP + H(+). It catalyses the reaction L-threonyl-[protein] + ATP = O-phospho-L-threonyl-[protein] + ADP + H(+). Functionally, binds to sigma F and blocks its ability to form an RNA polymerase holoenzyme (E-sigma F). Phosphorylates SpoIIAA on a serine residue. This phosphorylation may enable SpoIIAA to act as an anti-anti-sigma factor that counteracts SpoIIAB and thus releases sigma F from inhibition. This chain is Anti-sigma F factor, found in Lysinibacillus sphaericus (Bacillus sphaericus).